Reading from the N-terminus, the 398-residue chain is Stearoyl-[acyl-carrier-protein] 9-desaturase, chloroplastic (398 aa).

A chloroplast-targeting transit peptide spans 1 to 34 (MALKLNPLASQPYNFPSSARPPISTFRSPKFLCL). Fe cation-binding residues include Glu-140, Glu-178, His-181, Glu-231, Glu-264, and His-267.

Belongs to the fatty acid desaturase type 2 family. In terms of assembly, homodimer. The cofactor is Fe(2+).

Its subcellular location is the plastid. The protein resides in the chloroplast. The enzyme catalyses octadecanoyl-[ACP] + 2 reduced [2Fe-2S]-[ferredoxin] + O2 + 2 H(+) = (9Z)-octadecenoyl-[ACP] + 2 oxidized [2Fe-2S]-[ferredoxin] + 2 H2O. It participates in lipid metabolism; fatty acid metabolism. In terms of biological role, converts stearoyl-ACP to oleoyl-ACP by introduction of a cis double bond between carbons 9 and 10 of the acyl chain. The polypeptide is Stearoyl-[acyl-carrier-protein] 9-desaturase, chloroplastic (Brassica napus (Rape)).